A 1142-amino-acid chain; its full sequence is Zinc finger MYM-type protein 1 (1142 aa).

A Glycyl lysine isopeptide (Lys-Gly) (interchain with G-Cter in SUMO2) cross-link involves residue K25. 3 consecutive MYM-type zinc fingers follow at residues 110–148, 160–203, and 210–245; these read QLFCSIPCITEYISSASSPVPSKRTCSNCSKDILNPKDV, KTFC…QYEV, and HNLCSNACLSKFHSANNFIMNCCENCGTYCYTSSSL. A Glycyl lysine isopeptide (Lys-Gly) (interchain with G-Cter in SUMO2) cross-link involves residue K284. The segment at 300 to 331 adopts an MYM-type 4 zinc-finger fold; it reads ELFCSINCFSAYSKAKMESSSVSVVSVVHDTS. The segment covering 385–396 has biased composition (polar residues); the sequence is KSSPSEPSNAVA. The segment at 385–413 is disordered; sequence KSSPSEPSNAVASSSTEQPSVSPSSSVFS. The segment covering 397–413 has biased composition (low complexity); it reads SSSTEQPSVSPSSSVFS. Residues 452 to 538 form a TTF-type zinc finger; it reads KSRSIKKSCC…YQFCDGAVSD (87 aa).

It is found in the nucleus. This Homo sapiens (Human) protein is Zinc finger MYM-type protein 1 (ZMYM1).